The chain runs to 558 residues: Asparagine--tRNA ligase, cytoplasmic (558 aa).

The residue at position 71 (serine 71) is a Phosphoserine. A disordered region spans residues 79-101 (MWHREQMKSESREKKEAEDSLRR). Over residues 81–101 (HREQMKSESREKKEAEDSLRR) the composition is skewed to basic and acidic residues. 2 positions are modified to N6-acetyllysine: lysine 254 and lysine 500.

The protein belongs to the class-II aminoacyl-tRNA synthetase family. In terms of assembly, homodimer.

The protein resides in the cytoplasm. The catalysed reaction is tRNA(Asn) + L-asparagine + ATP = L-asparaginyl-tRNA(Asn) + AMP + diphosphate + H(+). Functionally, catalyzes the attachment of asparagine to tRNA(Asn) in a two-step reaction: asparagine is first activated by ATP to form Asn-AMP and then transferred to the acceptor end of tRNA(Asn). In addition to its essential role in protein synthesis, acts as a signaling molecule that induced migration of CCR3-expressing cells. Has an essential role in the development of the cerebral cortex, being required for proper proliferation of radial glial cells. The sequence is that of Asparagine--tRNA ligase, cytoplasmic from Macaca fascicularis (Crab-eating macaque).